Reading from the N-terminus, the 106-residue chain is Urease subunit beta (106 aa).

It belongs to the urease beta subunit family. Heterotrimer of UreA (gamma), UreB (beta) and UreC (alpha) subunits. Three heterotrimers associate to form the active enzyme.

It localises to the cytoplasm. The catalysed reaction is urea + 2 H2O + H(+) = hydrogencarbonate + 2 NH4(+). Its pathway is nitrogen metabolism; urea degradation; CO(2) and NH(3) from urea (urease route): step 1/1. The sequence is that of Urease subunit beta from Synechococcus sp. (strain CC9902).